The chain runs to 560 residues: DNA ligase B (560 aa).

The active-site N6-AMP-lysine intermediate is the Lys124.

This sequence belongs to the NAD-dependent DNA ligase family. LigB subfamily.

The catalysed reaction is NAD(+) + (deoxyribonucleotide)n-3'-hydroxyl + 5'-phospho-(deoxyribonucleotide)m = (deoxyribonucleotide)n+m + AMP + beta-nicotinamide D-nucleotide.. Its function is as follows. Catalyzes the formation of phosphodiester linkages between 5'-phosphoryl and 3'-hydroxyl groups in double-stranded DNA using NAD as a coenzyme and as the energy source for the reaction. The chain is DNA ligase B from Shigella sonnei (strain Ss046).